A 217-amino-acid chain; its full sequence is Protein-L-isoaspartate O-methyltransferase (217 aa).

Ser-62 is a catalytic residue.

This sequence belongs to the methyltransferase superfamily. L-isoaspartyl/D-aspartyl protein methyltransferase family.

It is found in the cytoplasm. The catalysed reaction is [protein]-L-isoaspartate + S-adenosyl-L-methionine = [protein]-L-isoaspartate alpha-methyl ester + S-adenosyl-L-homocysteine. Catalyzes the methyl esterification of L-isoaspartyl residues in peptides and proteins that result from spontaneous decomposition of normal L-aspartyl and L-asparaginyl residues. It plays a role in the repair and/or degradation of damaged proteins. The polypeptide is Protein-L-isoaspartate O-methyltransferase (Trichlorobacter lovleyi (strain ATCC BAA-1151 / DSM 17278 / SZ) (Geobacter lovleyi)).